Here is a 198-residue protein sequence, read N- to C-terminus: MKYPDFTLENKLSGVIAGVDEVGRGPLAGPVISAAVVFIDRNTIIDGINDSKKLTPQCRQVLYEKITSVAKFGIGMASVEEINSYNILQATKLSMKRALIDLDLELDYVLVDGNQPPEVKWQVKSIVNGDNLSTSIAAASIVAKVTRDRLMQELHNKHPEYNWYKNKGYGTKEHLNAIGLYGITEHHRKNFAPISRAL.

The 185-residue stretch at G14 to L198 folds into the RNase H type-2 domain. D20, E21, and D112 together coordinate a divalent metal cation.

It belongs to the RNase HII family. It depends on Mn(2+) as a cofactor. Mg(2+) is required as a cofactor.

It is found in the cytoplasm. It carries out the reaction Endonucleolytic cleavage to 5'-phosphomonoester.. Functionally, endonuclease that specifically degrades the RNA of RNA-DNA hybrids. This chain is Ribonuclease HII, found in Wolbachia pipientis wMel.